The following is a 244-amino-acid chain: MSEIIYGIHAVKALLERDPQRFLEVFILKGRDDRRLQPVIAELEAQGIVIQVASRQWLDKQAEDAVHQGIVAKVKEGRKYQENDLPAMLDNLEMPFLLILDGVTDPHNLGACLRNADGAGVHAVIVPRDRSAQLNATVKKVACGAAETIPVISVTNLARTMRLLQERNIWIVGTAGEADHTLYQSKLTGPLALVMGAEGEGMRRLTREHCDELISIPMAGSVSSLNVSVATGVCLFEAVRQRGG.

The S-adenosyl-L-methionine site is built by glycine 196, isoleucine 216, and leucine 225.

This sequence belongs to the class IV-like SAM-binding methyltransferase superfamily. RNA methyltransferase TrmH family. RlmB subfamily. Homodimer.

The protein resides in the cytoplasm. The catalysed reaction is guanosine(2251) in 23S rRNA + S-adenosyl-L-methionine = 2'-O-methylguanosine(2251) in 23S rRNA + S-adenosyl-L-homocysteine + H(+). Its function is as follows. Specifically methylates the ribose of guanosine 2251 in 23S rRNA. This is 23S rRNA (guanosine-2'-O-)-methyltransferase RlmB from Pectobacterium atrosepticum (strain SCRI 1043 / ATCC BAA-672) (Erwinia carotovora subsp. atroseptica).